A 453-amino-acid polypeptide reads, in one-letter code: Na(+)/H(+) antiporter NhaA (453 aa).

11 consecutive transmembrane segments (helical) span residues 28-48 (FLHI…AALI), 79-99 (LHFL…GMEI), 115-135 (ALPL…YFIL), 144-164 (GWAV…ALLG), 173-193 (VFLL…IAVF), 196-216 (GGMD…VLGM), 241-261 (TGAH…VFAP), 321-341 (VAFG…LDGI), 355-375 (VLIA…FLMV), 393-413 (LVGL…TLAF), and 424-444 (LGIL…GFFQ).

The protein belongs to the NhaA Na(+)/H(+) (TC 2.A.33) antiporter family.

It localises to the cell inner membrane. It catalyses the reaction Na(+)(in) + 2 H(+)(out) = Na(+)(out) + 2 H(+)(in). Na(+)/H(+) antiporter that extrudes sodium in exchange for external protons. The protein is Na(+)/H(+) antiporter NhaA of Janthinobacterium sp. (strain Marseille) (Minibacterium massiliensis).